A 377-amino-acid chain; its full sequence is Homoserine O-succinyltransferase (377 aa).

Positions 50-358 constitute an AB hydrolase-1 domain; it reads NAILVCHALS…PSTYGHDSFL (309 aa). S156 serves as the catalytic Nucleophile. R226 contributes to the substrate binding site. Catalysis depends on residues D321 and H354. D355 provides a ligand contact to substrate.

It belongs to the AB hydrolase superfamily. MetX family. As to quaternary structure, homodimer.

Its subcellular location is the cytoplasm. The catalysed reaction is L-homoserine + succinyl-CoA = O-succinyl-L-homoserine + CoA. Its pathway is amino-acid biosynthesis; L-methionine biosynthesis via de novo pathway; O-succinyl-L-homoserine from L-homoserine: step 1/1. Transfers a succinyl group from succinyl-CoA to L-homoserine, forming succinyl-L-homoserine. The polypeptide is Homoserine O-succinyltransferase (Nitrosomonas eutropha (strain DSM 101675 / C91 / Nm57)).